A 1404-amino-acid polypeptide reads, in one-letter code: DNA-directed RNA polymerase subunit beta' (1404 aa).

Cys60, Cys62, Cys75, and Cys78 together coordinate Zn(2+). Mg(2+) contacts are provided by Asp449, Asp451, and Asp453. Zn(2+) contacts are provided by Cys778, Cys852, Cys859, and Cys862. A disordered region spans residues Asp1381 to Glu1404. Residues Leu1384–Glu1404 are compositionally biased toward acidic residues.

Belongs to the RNA polymerase beta' chain family. As to quaternary structure, the RNAP catalytic core consists of 2 alpha, 1 beta, 1 beta' and 1 omega subunit. When a sigma factor is associated with the core the holoenzyme is formed, which can initiate transcription. It depends on Mg(2+) as a cofactor. Requires Zn(2+) as cofactor.

The enzyme catalyses RNA(n) + a ribonucleoside 5'-triphosphate = RNA(n+1) + diphosphate. In terms of biological role, DNA-dependent RNA polymerase catalyzes the transcription of DNA into RNA using the four ribonucleoside triphosphates as substrates. The chain is DNA-directed RNA polymerase subunit beta' from Leptospira borgpetersenii serovar Hardjo-bovis (strain JB197).